Consider the following 302-residue polypeptide: Putative peptide permease protein BRA0407/BS1330_II0404 (302 aa).

The disordered stretch occupies residues 1–22 (MRSSIHASRLRKMGQSIPASTG). 6 consecutive transmembrane segments (helical) span residues 38–58 (IFGL…PLWL), 101–121 (LLVA…IGAI), 147–167 (IFLL…VVVI), 200–222 (AGLG…VVYA), 230–250 (ILLE…AASW), and 268–288 (WQWL…NFIG). The ABC transmembrane type-1 domain maps to 97-288 (GRISLLVAVS…LAVLAINFIG (192 aa)).

The protein belongs to the binding-protein-dependent transport system permease family. The complex is composed of two ATP-binding proteins (BRA0404 and BRA0405), two transmembrane proteins (BRA0407 and BRA0408) and a solute-binding protein (BRA0409).

The protein resides in the cell inner membrane. Its function is as follows. Probably part of an ABC transporter complex that could be involved in peptide import. Probably responsible for the translocation of the substrate across the membrane. This chain is Putative peptide permease protein BRA0407/BS1330_II0404, found in Brucella suis biovar 1 (strain 1330).